A 459-amino-acid polypeptide reads, in one-letter code: UDP-N-acetylmuramate--L-alanine ligase (459 aa).

113-119 (GSHGKTT) provides a ligand contact to ATP.

This sequence belongs to the MurCDEF family.

The protein localises to the cytoplasm. It carries out the reaction UDP-N-acetyl-alpha-D-muramate + L-alanine + ATP = UDP-N-acetyl-alpha-D-muramoyl-L-alanine + ADP + phosphate + H(+). It functions in the pathway cell wall biogenesis; peptidoglycan biosynthesis. Cell wall formation. The chain is UDP-N-acetylmuramate--L-alanine ligase from Persephonella marina (strain DSM 14350 / EX-H1).